We begin with the raw amino-acid sequence, 616 residues long: Zinc metalloproteinase-disintegrin-like protein H3 (616 aa).

The first 20 residues, 1-20, serve as a signal peptide directing secretion; the sequence is MIQVLLVIICLAVFPYQGSS. Positions 21–193 are excised as a propeptide; that stretch reads IILESGNVND…KKASQLNLTP (173 aa). Pyrrolidone carboxylic acid (Glu) is present on Glu-194. Positions 203–399 constitute a Peptidase M12B domain; it reads KYIKLVIVAD…KMPQCILNKP (197 aa). Disulfide bonds link Cys-314–Cys-394, Cys-354–Cys-378, and Cys-356–Cys-361. Position 339 (His-339) interacts with Zn(2+). The short motif at 339–350 is the Metal-binding element; that stretch reads HEMGHNLGMDHD. The Proton acceptor role is filled by Glu-340. Zn(2+) is bound by residues His-343 and His-349. An N-linked (GlcNAc...) asparagine glycan is attached at Asn-377. Residues 407–493 enclose the Disintegrin domain; the sequence is PAVCGNYLVE…ECPTDQFQRN (87 aa). 5 residues coordinate Ca(2+): Val-409, Asn-412, Glu-416, Glu-419, and Asp-422. Intrachain disulfides connect Cys-410/Cys-439, Cys-421/Cys-434, Cys-423/Cys-429, Cys-433/Cys-456, Cys-447/Cys-453, Cys-452/Cys-478, Cys-465/Cys-485, Cys-472/Cys-504, Cys-497/Cys-509, Cys-516/Cys-566, Cys-531/Cys-577, Cys-544/Cys-554, Cys-561/Cys-603, and Cys-597/Cys-609. Positions 471–473 match the D/ECD-tripeptide motif; it reads ECD. The Ca(2+) site is built by Asp-473, Asp-476, and Asp-488. N-linked (GlcNAc...) asparagine glycosylation occurs at Asn-506.

It belongs to the venom metalloproteinase (M12B) family. P-III subfamily. P-IIIc sub-subfamily. As to quaternary structure, homodimer; disulfide-linked. Zn(2+) is required as a cofactor. Post-translationally, N-glycosylated. The N-terminus is blocked. Expressed by the venom gland (at protein level). Expressed by the venom gland.

It localises to the secreted. The proteolytic activity requires Zn(2+) and Ca(2+) ions. The alpha-fibrinogenase activity is completely inhibited by EDTA, but not by PMSF. In terms of biological role, zinc metalloprotease that has fibrinogenolytic and hemorrhagic activities. Cleaves insulin B chain readily at '38-Ala-|-Leu-39' bond, and at a significantly slower rate, at '40-Tyr-|-Leu-41' bond. Hydrolyzes isolated extracellular matrix (ECM) bovine fibronectin, and basal membrane (BM) proteins human collagen IV and, to a lesser extent, murine laminin, in vitro. Cleaves murine nidogen (at '350-Ser-|-Phe-351' and '380-Tyr-|-Asn-381' bonds), but not laminin, in a solubilized BM preparation. Hydrolyzes plasma proteins involved in blood coagulation in vitro. It significantly prolongs thrombin time. Has potent alpha-fibrinogenase activity cleaving human fibrinogen alpha chain at '432-Lys-|-Leu-433' bond, but does not cleave beta or gamma chains. Hydrolyzes bovine prothrombin, but does not cleave it at '366-Arg-|-Ile-367' bond, which is necessary for the formation of active alpha-thrombin, however, the cleavage of fragment 1 from it leads to reduced alpha-thrombin formation. Hydrolyzes bovine factor X heavy chain at '211-Ser-|-Leu-212', '213-Asp-|-Leu-214' and '216-Gly-|-Leu-217' bonds activating it only marginally as does not cleave at the physiological activation site. Does not cleave factor X light chain. No hydrolysis or activation of plasminogen. The alpha-fibrinogenase activity likely contributes to its hemorrhagic activity, which in rat can be completely neutralized in vivo by anti-ammodytagin antibodies, which strongly cross-react with this protein. Has very weak collagen-, ADP- and ristocetin-induced platelet aggregation inhibition activity in vitro. This chain is Zinc metalloproteinase-disintegrin-like protein H3, found in Vipera ammodytes ammodytes (Western sand viper).